We begin with the raw amino-acid sequence, 663 residues long: MGAVSRDDYIALCTELVEHDRRYYALNQPTISDYSYDMKMRELQEIEVQHPEWKVSWSPTMYLGDRPSGQFPVVPHSSPMLSIANVYSLQELEEFFSRTEKLLGYSPGYSLELKIDGIAVAIRYEKRLFAQALSRGNGVKGEDITANVSTIRSLPMRLPQEAPEDLEVRGEVFLSYEAFEELNACQREQGKLEFANPRNAAGGTLKLLSSKEAAKRKLDLSVYGLITDQKKRSHFENLQLCSQWGFFVAGMPKQCRSRQEVVERIREIEEMRAALPMAIDGVVIKVDNIAHQDRLGLTSKHYRWAIAYKYAPERAETILEDIVVQVGKTGILTPVAELAPVFLSGSRVSRASLYNQDEIEKKDIRIGDSVYVEKGGEVIPKIVGINLAKRSLESEPWKMPSLCPVCHEPVVKEKVSVRCINPLCSGGMLEKICFFASKSALNIDHLGEKVVTKLFEVGLISSCSDIFALTEEDLKQVPGFKDRSIQNLLASIAGAKKVALDRLLTALSIPFVGSSGAIALADHFGTLDKVIEASLDELMSIEGIGPKVAASIVAFFSKHENREEIRRMQELGVQVLSKQSDKEAPLQGKVFVLTGTLQQMTRTQAEERIRSLGGKVSSSVSKSTYAVIAGSEAGGKLKKAQDLGLSIWNESKLSRILDAKSVS.

NAD(+) contacts are provided by residues 33-37, 82-83, and Glu112; these read DYSYD and SI. Lys114 acts as the N6-AMP-lysine intermediate in catalysis. The NAD(+) site is built by Arg135, Glu171, Lys285, and Lys309. Cys403, Cys406, Cys419, and Cys424 together coordinate Zn(2+). Residues 581-663 form the BRCT domain; sequence DKEAPLQGKV…SRILDAKSVS (83 aa).

Belongs to the NAD-dependent DNA ligase family. LigA subfamily. Requires Mg(2+) as cofactor. Mn(2+) is required as a cofactor.

The enzyme catalyses NAD(+) + (deoxyribonucleotide)n-3'-hydroxyl + 5'-phospho-(deoxyribonucleotide)m = (deoxyribonucleotide)n+m + AMP + beta-nicotinamide D-nucleotide.. DNA ligase that catalyzes the formation of phosphodiester linkages between 5'-phosphoryl and 3'-hydroxyl groups in double-stranded DNA using NAD as a coenzyme and as the energy source for the reaction. It is essential for DNA replication and repair of damaged DNA. This Chlamydia trachomatis serovar L2 (strain ATCC VR-902B / DSM 19102 / 434/Bu) protein is DNA ligase.